We begin with the raw amino-acid sequence, 1295 residues long: MNEVNDFDAIRISLASPDQIRSWSYGEVTKPETINYRTLKPERDGLFCERIFGPIKDFECACGKYKRIRYKGIICDKCGVEIARAKVRRERMGHIELACPVGHIWFTRGIPSRVGLLLNLSTRSLERIIYYSHFIITAVNDDAREKAIKDLEVISSQRVADKGSEVDTRVAQMEAEDATVEAINQIRRDFSTEREQMEEDIQLLIDQLKDLQKGNLLTENQYYELKQRFSNVFEASMGAEALLKLLSYIDMDKERSKLIQETRSTSGQRRKKAGKQLQLVEAFRRSSNKPEWMIMTVLPVLPPDLRPMVQLDGGRFATSDLNDLYRRVINRNNRLQHLMEIGAPEIIIRNEKRMLQEAVDSLIDNGRRGKSVAVNGDHKAKSLSDLLRGKQGRFRQNLLGKRVDYSGRSVIVVGPSLKLSQCGLPRRMALELFKPFVMHRLVRDGLAPNIKSARRLVERARPEVYDILEEVVKDRPVLLNRAPTLHRLSIQAFEPVLIDGSALRLHPLVCSAFNADFDGDQMAVHVPLSKAAVKEARETMLSIHNMMLPSSGEPVVSPSLDMVFGCYYLTTTRPGAKGEGKIFGDFEEAKRYYEMGIIDLRAIIKVRDGKGNMLETTTGRIIFNDVLPKAVEFQNMDIPKSAIKKIIGRCYKILSSQDMAVMLDKIKELGFKFATSSGISIAMSDISVPREKTKLVAAADERTAIAEGQFARGLITEDERYNSIIETWMETTDRITDAIQAGFDKQGSVYMMANSGAKGNISQIRQMAGLRGLMTNPSGRIIDFPIKSSLREGLTALEYFISTHGARKGLADTALRTSGSGYLTRRLIDVTQDVIILQEDCGTANGTWIIEPKEKGMLPPLVDRILGRWTAHNVVHPQTGEIIVDNNEEIDEIKAKAIGEAGITEVFVRSPLTCESTHGMCRRCYGRDLGRVRLVDMNTAVGIIAAQSIGEPGTQLTLRTFHTGGVVGVDITTGLPRVEELFEARPPKVQSIISEIDGVVEVIENENGRHIRIASDEVYQDEYELPSGWKTQVQSRQWVDSGMVLASPELEGKSKAVVQSDQNVVARVAGEVTVEGNLITIKYSESEEREYTIPAAMQIKVKTGDTIRAGQQLTDGSINPQDILSILGRDAVQKYLVEEVQKVYYSQGVHINDKHIEVIARQMLIKVRIDSSGDTDLVPGELVDKFRYEDINAKVLAEGGEPATAHTVLMGITRASLSTESWLAAASFQETTRVLTDAAIYGRVDKLSGLKENVIIGKLIPAQCKSCKEATIERAERIAAAASAPAMSGLPENCL.

Positions 60, 62, 75, and 78 each coordinate Zn(2+). Residues Asp516, Asp518, and Asp520 each coordinate Mg(2+). Residues Cys841, Cys914, Cys921, and Cys924 each contribute to the Zn(2+) site.

This sequence belongs to the RNA polymerase beta' chain family. The RNAP catalytic core consists of 2 alpha, 1 beta, 1 beta' and 1 omega subunit. When a sigma factor is associated with the core the holoenzyme is formed, which can initiate transcription. Mg(2+) serves as cofactor. Requires Zn(2+) as cofactor.

The catalysed reaction is RNA(n) + a ribonucleoside 5'-triphosphate = RNA(n+1) + diphosphate. Its function is as follows. DNA-dependent RNA polymerase catalyzes the transcription of DNA into RNA using the four ribonucleoside triphosphates as substrates. The polypeptide is DNA-directed RNA polymerase subunit beta' (Dehalococcoides mccartyi (strain CBDB1)).